The sequence spans 873 residues: F-box only protein 41 (873 aa).

Over residues 85–97 (ESTSFQGKEQATG) the composition is skewed to polar residues. Disordered regions lie at residues 85–110 (ESTS…HHHH), 163–193 (SSAC…SPAD), and 345–540 (SSSC…PSRS). Over residues 168–178 (TPPPGPGPGPC) the composition is skewed to pro residues. The segment covering 179–192 (SGPSSASPASPSPA) has biased composition (low complexity). Positions 207–349 (ALEKLEVDRR…QLQVISSSCG (143 aa)) form a coiled coil. Gly residues predominate over residues 357–371 (GRGGGGSASGPGVRG). Arginine 358 is modified (omega-N-methylarginine). Polar residues-rich tracts occupy residues 384-414 (VPST…SSGC) and 442-456 (AQAT…QAPR). Serine 476 bears the Phosphoserine mark. Threonine 477 carries the phosphothreonine modification. The 45-residue stretch at 548 to 592 (ILKMRAALFCIFTYLDTRTLLHAAEVCRDWRFVARHPAVWTRVLL) folds into the F-box domain. Phosphoserine is present on serine 760.

As to quaternary structure, directly interacts with SKP1 and CUL1.

Substrate-recognition component of the SCF (SKP1-CUL1-F-box protein)-type E3 ubiquitin ligase complex. This is F-box only protein 41 (Fbxo41) from Mus musculus (Mouse).